The primary structure comprises 42 residues: Photosystem II reaction center protein J (42 aa).

A helical membrane pass occupies residues 10 to 30 (IPLWLVGTVVGTLALGLVALF).

Belongs to the PsbJ family. In terms of assembly, PSII is composed of 1 copy each of membrane proteins PsbA, PsbB, PsbC, PsbD, PsbE, PsbF, PsbH, PsbI, PsbJ, PsbK, PsbL, PsbM, PsbT, PsbX, PsbY, PsbZ, Psb30/Ycf12, at least 3 peripheral proteins of the oxygen-evolving complex and a large number of cofactors. It forms dimeric complexes.

The protein resides in the plastid. It is found in the chloroplast thylakoid membrane. Functionally, one of the components of the core complex of photosystem II (PSII). PSII is a light-driven water:plastoquinone oxidoreductase that uses light energy to abstract electrons from H(2)O, generating O(2) and a proton gradient subsequently used for ATP formation. It consists of a core antenna complex that captures photons, and an electron transfer chain that converts photonic excitation into a charge separation. This Oltmannsiellopsis viridis (Marine flagellate) protein is Photosystem II reaction center protein J.